The primary structure comprises 125 residues: Acidic phospholipase A2 5 (125 aa).

Residue Ser-1 is a signal peptide. Positions 2 to 7 (NRPMPL) are excised as a propeptide. Disulfide bonds link Cys-18–Cys-77, Cys-33–Cys-124, Cys-35–Cys-50, Cys-37–Cys-54, Cys-49–Cys-105, Cys-56–Cys-98, Cys-66–Cys-91, and Cys-84–Cys-96. N-acetyl-beta-D-glucosamine is bound at residue Phe-28. Residue Asp-30 coordinates Zn(2+). Ca(2+) is bound by residues Tyr-34 and Gly-36. Residues His-53 and Lys-69 each contribute to the N-acetyl-beta-D-glucosamine site. His-53 is an active-site residue. Glu-76 serves as a coordination point for Zn(2+). The active site involves Asp-99. A Zn(2+)-binding site is contributed by Asn-117.

In terms of assembly, heterodimer formed between isoform 5 and isoform 6 in presence of zinc ion and monomer in absence of zinc ion. It depends on Ca(2+) as a cofactor. As to expression, expressed by the venom gland.

It is found in the secreted. The catalysed reaction is a 1,2-diacyl-sn-glycero-3-phosphocholine + H2O = a 1-acyl-sn-glycero-3-phosphocholine + a fatty acid + H(+). Functionally, PLA2 catalyzes the calcium-dependent hydrolysis of the 2-acyl groups in 3-sn-phosphoglycerides. The polypeptide is Acidic phospholipase A2 5 (Naja sagittifera (Andaman cobra)).